A 299-amino-acid polypeptide reads, in one-letter code: Protease HtpX homolog (299 aa).

The next 2 membrane-spanning stretches (helical) occupy residues 5-25 and 44-64; these read IFLF…VLSV and MVAL…MSLA. H155 is a binding site for Zn(2+). E156 is an active-site residue. Zn(2+) is bound at residue H159. 2 helical membrane-spanning segments follow: residues 170 to 190 and 205 to 225; these read LLQG…AWIA and FIAV…VVFA. E231 serves as a coordination point for Zn(2+).

It belongs to the peptidase M48B family. Zn(2+) serves as cofactor.

It is found in the cell membrane. This Bacillus pumilus (strain SAFR-032) protein is Protease HtpX homolog.